A 570-amino-acid polypeptide reads, in one-letter code: Dihydroxy-acid dehydratase (570 aa).

The interval 1–25 is disordered; it reads MSQQDSPANADHRRRHSSIVVDGPG. Cys60 contributes to the [2Fe-2S] cluster binding site. Residue Asp92 coordinates Mg(2+). A [2Fe-2S] cluster-binding site is contributed by Cys133. Positions 134 and 135 each coordinate Mg(2+). N6-carboxylysine is present on Lys135. Cys202 is a binding site for [2Fe-2S] cluster. Residue Glu453 participates in Mg(2+) binding. The active-site Proton acceptor is the Ser479.

Belongs to the IlvD/Edd family. In terms of assembly, homodimer. [2Fe-2S] cluster is required as a cofactor. It depends on Mg(2+) as a cofactor.

The enzyme catalyses (2R)-2,3-dihydroxy-3-methylbutanoate = 3-methyl-2-oxobutanoate + H2O. It carries out the reaction (2R,3R)-2,3-dihydroxy-3-methylpentanoate = (S)-3-methyl-2-oxopentanoate + H2O. Its pathway is amino-acid biosynthesis; L-isoleucine biosynthesis; L-isoleucine from 2-oxobutanoate: step 3/4. It functions in the pathway amino-acid biosynthesis; L-valine biosynthesis; L-valine from pyruvate: step 3/4. Functions in the biosynthesis of branched-chain amino acids. Catalyzes the dehydration of (2R,3R)-2,3-dihydroxy-3-methylpentanoate (2,3-dihydroxy-3-methylvalerate) into 2-oxo-3-methylpentanoate (2-oxo-3-methylvalerate) and of (2R)-2,3-dihydroxy-3-methylbutanoate (2,3-dihydroxyisovalerate) into 2-oxo-3-methylbutanoate (2-oxoisovalerate), the penultimate precursor to L-isoleucine and L-valine, respectively. The chain is Dihydroxy-acid dehydratase from Chromohalobacter salexigens (strain ATCC BAA-138 / DSM 3043 / CIP 106854 / NCIMB 13768 / 1H11).